The sequence spans 88 residues: Small ribosomal subunit protein uS15c (88 aa).

Belongs to the universal ribosomal protein uS15 family. Part of the 30S ribosomal subunit.

The protein resides in the plastid. The protein localises to the chloroplast. This Pinus thunbergii (Japanese black pine) protein is Small ribosomal subunit protein uS15c (rps15).